The sequence spans 518 residues: Dihydro-ML-236C monooxygenase mlcC (518 aa).

The Cytoplasmic segment spans residues 1 to 31 (MLGQVLLTVESYQWVSTPQALVAVAVLLSLI). A helical; Signal-anchor for type II membrane protein membrane pass occupies residues 32 to 48 (AYRLRGRQSELQVYNPK). Topologically, residues 49-518 (KWWELTTMRA…EDIPLPHDRC (470 aa)) are lumenal. Cys454 serves as a coordination point for heme.

The protein belongs to the cytochrome P450 family. Requires heme as cofactor.

Its subcellular location is the endoplasmic reticulum membrane. It carries out the reaction dihydro-ML-236C carboxylate + reduced [NADPH--hemoprotein reductase] + O2 = ML-236C carboxylate + oxidized [NADPH--hemoprotein reductase] + 2 H2O + H(+). The catalysed reaction is ML-236C carboxylate + reduced [NADPH--hemoprotein reductase] + O2 = ML-236A carboxylate + oxidized [NADPH--hemoprotein reductase] + H2O + H(+). It functions in the pathway polyketide biosynthesis. Dihydro-ML-236C carboxylate monooxygenase; part of the gene cluster that mediates the biosynthesis of compactin, also known as mevastatin or ML-236B, and which acts as a potent competitive inhibitor of HMG-CoA reductase. Compactin biosynthesis is performed in two stages. The first stage is catalyzed by the nonaketide synthase mlcA, which belongs to type I polyketide synthases and catalyzes the iterative nine-step formation of the polyketide. This PKS stage is completed by the action of dehydrogenase mlcG, which catalyzes the NADPH-dependent reduction of the unsaturated tetra-, penta- and heptaketide intermediates that arise during the mlcA-mediated biosynthesis of the nonaketide chain and leads to dihydro-ML-236C carboxylate. Covalently bound dihydro-ML-236C carboxylate is released from mlcA by the mlcF esterase. Conversion of dihydro-ML-236C carboxylate into ML-236A carboxylate is subsequently performed with the participation of molecular oxygen and P450 monoogygenase mlcC. Finally, mlcH performs the conversion of ML-236A carboxylate to ML-236B/compactin carboxylate through the addition of the side-chain diketide moiety produced by the diketide synthase mlcB. The polypeptide is Dihydro-ML-236C monooxygenase mlcC (Penicillium citrinum).